The following is a 395-amino-acid chain: Putative gustatory receptor 93b (395 aa).

Over 1-18 (MSGLLVMPRILRCLNVSR) the chain is Cytoplasmic. Residues 19–39 (ISAILLRSCFLYGTFFGVITF) traverse the membrane as a helical segment. Topologically, residues 40–89 (RIERKDSQLVAINRRGYLWICLVIRLLASCFYGYSYDAWSGQYEDMYLRA) are extracellular. Residues 90 to 110 (FFGFRLIGCLICSVIILVMQF) form a helical membrane-spanning segment. Over 111–153 (WFGEELINLVNRFLQLFRRMQSLTNSPKNRFGDRAEFLLMFSK) the chain is Cytoplasmic. A helical transmembrane segment spans residues 154–174 (VFSLLFVFMAFRLMLSPWFLL). Residues 175–183 (TLVCDLYTS) lie on the Extracellular side of the membrane. The helical transmembrane segment at 184 to 204 (VGTGMITHLCFVGYLSIGVLY) threads the bilayer. At 205 to 267 (RDLNNYVDCQ…RSFQQLFDLP (63 aa)) the chain is on the cytoplasmic side. A helical membrane pass occupies residues 268–288 (LFLSLAQSLLAMSMVSYHAIL). The Extracellular segment spans residues 289-293 (RRQYS). Residues 294-314 (FNLWGLVIKLLIDVVLLTMSV) traverse the membrane as a helical segment. Over 315–369 (HSAVNGSRLIRRLSFENFYVTDSQSYHQKLELFLGRLQHQELRVFPLGLFEVSNE) the chain is Cytoplasmic. The helical transmembrane segment at 370-390 (LTLFFLSAMVTYLVFLVQYGM) threads the bilayer. Residues 391–395 (QSQQI) are Extracellular-facing.

The protein belongs to the insect chemoreceptor superfamily. Gustatory receptor (GR) family. Gr93a subfamily. In terms of tissue distribution, in larvae, is expressed in neurons of the terminal external chemosensory organ and of the dorsal pharyngeal sense organ.

The protein resides in the cell membrane. In terms of biological role, probable gustatory receptor which mediates acceptance or avoidance behavior, depending on its substrates. This is Putative gustatory receptor 93b (Gr93b) from Drosophila melanogaster (Fruit fly).